The primary structure comprises 261 residues: CD40 ligand (261 aa).

Topologically, residues 1 to 22 (MIETYSQPSPRSVATGPPVSMK) are cytoplasmic. A helical; Signal-anchor for type II membrane protein membrane pass occupies residues 23–46 (IFMYLLTVFLITQMIGSALFAVYL). Residues 47–261 (HRRLDKIEDE…GFTSFGLLKL (215 aa)) are Extracellular-facing. The 140-residue stretch at 122–261 (IAAHVISEAS…GFTSFGLLKL (140 aa)) folds into the THD domain. An intrachain disulfide couples cysteine 178 to cysteine 218. The N-linked (GlcNAc...) asparagine glycan is linked to asparagine 240.

It belongs to the tumor necrosis factor family. As to quaternary structure, homotrimer. Interacts with CD28. CD40 ligand, soluble form: Exists as either a monomer or a homotrimer. Forms a ternary complex between CD40 and integrins for CD40-CD40LG signaling. The soluble form derives from the membrane form by proteolytic processing.

The protein resides in the cell membrane. It localises to the cell surface. It is found in the secreted. In terms of biological role, cytokine that acts as a ligand to CD40/TNFRSF5. Costimulates T-cell proliferation and cytokine production. Its cross-linking on T-cells generates a costimulatory signal which enhances the production of IL4 and IL10 in conjunction with the TCR/CD3 ligation and CD28 costimulation. Induces the activation of NF-kappa-B. Induces the activation of kinases MAPK8 and PAK2 in T-cells. Mediates B-cell proliferation in the absence of co-stimulus as well as IgE production in the presence of IL4. Involved in immunoglobulin class switching. Acts as a ligand for integrins, specifically ITGA5:ITGB1 and ITGAV:ITGB3; both integrins and the CD40 receptor are required for activation of CD40-CD40LG signaling, which have cell-type dependent effects, such as B-cell activation, NF-kappa-B signaling and anti-apoptotic signaling. This is CD40 ligand (CD40LG) from Bos taurus (Bovine).